The following is a 137-amino-acid chain: Large ribosomal subunit protein uL16c (137 aa).

Belongs to the universal ribosomal protein uL16 family. Part of the 50S ribosomal subunit.

It localises to the plastid. Its subcellular location is the chloroplast. This Rhodomonas salina (Cryptomonas salina) protein is Large ribosomal subunit protein uL16c.